We begin with the raw amino-acid sequence, 222 residues long: MAGKPTLHYFNGRGRMECIRWLLAAAGVEFEEKFIEKPEDLDKLKNDGSLMFQQVPMVEIDGMKLVQTRAILNYIATKYNLYGKDMKERALIDMYSEGVADLGEMIMHFPLCPPAEKDAKLTLIREKTTNRYLPAFENVLKSHGQDYLVGNKLSRADIHLVELLYYVEELDPSLLANFPLLKALKARVSNIPAVKKFLQPGSQRKPPTDEKKIEEARKVFKF.

The residue at position 1 (Met1) is an N-acetylmethionine. Ala2 is subject to N-acetylalanine; in Glutathione S-transferase A1, N-terminally processed. A GST N-terminal domain is found at 3–83 (GKPTLHYFNG…YIATKYNLYG (81 aa)). N6-succinyllysine is present on Lys4. Glutathione is bound by residues Tyr9, Lys45, 54–55 (QV), and 67–68 (QT). The region spanning 85-208 (DMKERALIDM…QPGSQRKPPT (124 aa)) is the GST C-terminal domain.

It belongs to the GST superfamily. Alpha family. As to quaternary structure, homodimer or heterodimer of GSTA1 and GSTA2. Expressed in corpus luteum, adrenal gland, testis, liver, lung, thyroid and kidney.

Its subcellular location is the cytoplasm. It catalyses the reaction RX + glutathione = an S-substituted glutathione + a halide anion + H(+). The enzyme catalyses prostaglandin A2 + glutathione = prostaglandin A2-S-(R)-glutathione. The catalysed reaction is prostaglandin J2 + glutathione = prostaglandin J2-S-(R)-glutathione. It carries out the reaction (13S)-hydroperoxy-(9Z,11E)-octadecadienoate + 2 glutathione = (13S)-hydroxy-(9Z,11E)-octadecadienoate + glutathione disulfide + H2O. It catalyses the reaction androst-5-ene-3,17-dione = androst-4-ene-3,17-dione. Its function is as follows. Glutathione S-transferase that catalyzes the nucleophilic attack of the sulfur atom of glutathione on the electrophilic groups of a wide range of exogenous and endogenous compounds. Involved in the formation of glutathione conjugates of both prostaglandin A2 (PGA2) and prostaglandin J2 (PGJ2). It also catalyzes the isomerization of D5-androstene-3,17-dione (AD) into D4-androstene-3,17-dione and may therefore play an important role in hormone biosynthesis. Through its glutathione-dependent peroxidase activity toward the fatty acid hydroperoxide (13S)-hydroperoxy-(9Z,11E)-octadecadienoate/13-HPODE it is also involved in the metabolism of oxidized linoleic acid. The chain is Glutathione S-transferase A1 (GSTA1) from Bos taurus (Bovine).